We begin with the raw amino-acid sequence, 291 residues long: ATP phosphoribosyltransferase (291 aa).

It belongs to the ATP phosphoribosyltransferase family. Long subfamily. The cofactor is Mg(2+).

Its subcellular location is the cytoplasm. The enzyme catalyses 1-(5-phospho-beta-D-ribosyl)-ATP + diphosphate = 5-phospho-alpha-D-ribose 1-diphosphate + ATP. It participates in amino-acid biosynthesis; L-histidine biosynthesis; L-histidine from 5-phospho-alpha-D-ribose 1-diphosphate: step 1/9. With respect to regulation, feedback inhibited by histidine. Functionally, catalyzes the condensation of ATP and 5-phosphoribose 1-diphosphate to form N'-(5'-phosphoribosyl)-ATP (PR-ATP). Has a crucial role in the pathway because the rate of histidine biosynthesis seems to be controlled primarily by regulation of HisG enzymatic activity. This is ATP phosphoribosyltransferase from Geotalea daltonii (strain DSM 22248 / JCM 15807 / FRC-32) (Geobacter daltonii).